Consider the following 420-residue polypeptide: UDP-N-acetylglucosamine 1-carboxyvinyltransferase (420 aa).

22-23 (KN) is a phosphoenolpyruvate binding site. Residue arginine 93 participates in UDP-N-acetyl-alpha-D-glucosamine binding. Residue cysteine 117 is the Proton donor of the active site. Residue cysteine 117 is modified to 2-(S-cysteinyl)pyruvic acid O-phosphothioketal. 2 residues coordinate UDP-N-acetyl-alpha-D-glucosamine: aspartate 307 and isoleucine 329.

This sequence belongs to the EPSP synthase family. MurA subfamily.

It is found in the cytoplasm. The enzyme catalyses phosphoenolpyruvate + UDP-N-acetyl-alpha-D-glucosamine = UDP-N-acetyl-3-O-(1-carboxyvinyl)-alpha-D-glucosamine + phosphate. It participates in cell wall biogenesis; peptidoglycan biosynthesis. In terms of biological role, cell wall formation. Adds enolpyruvyl to UDP-N-acetylglucosamine. In Saccharophagus degradans (strain 2-40 / ATCC 43961 / DSM 17024), this protein is UDP-N-acetylglucosamine 1-carboxyvinyltransferase.